The primary structure comprises 398 residues: MNNNTLNITNQRTAAAMSQIYFLVVYQTAVMIVSLLGNLFLLFVIFRANQVMKRRVSPVQLLIIHTCVADLLFALLSLGTEILTLRTYPQYYGSNFVCKLMRYVQMFPMYASPFLLVAISADRYQAICRPLAHFRSSRYRRPNWMAAIAWGLALVLSIPQFFVWTKHSKTGRCSTIYGQNKNTVKITYVIMFNTLAWLLPSILAAVFYYCVCKAVRLSSTKSVRAMDSQKRNGKYSSGATEDYIEELRKKSKGFRQQMSEFDRKRVQTVRLTITIVACNFFLWMPFCLINVIQALWPEISHIMFINYVAILGNLNSCLNPWIYILFNRSHVRKALCRSRRSFTEVTKKRSFENFECSSTATMNNNYNNCHAYTAFSNRSQLKFDSYATDSTSLKTNSN.

At 1–25 (MNNNTLNITNQRTAAAMSQIYFLVV) the chain is on the extracellular side. 2 N-linked (GlcNAc...) asparagine glycosylation sites follow: N3 and N7. Residues 26-46 (YQTAVMIVSLLGNLFLLFVIF) traverse the membrane as a helical segment. The Cytoplasmic segment spans residues 47 to 58 (RANQVMKRRVSP). The chain crosses the membrane as a helical span at residues 59 to 79 (VQLLIIHTCVADLLFALLSLG). Topologically, residues 80–99 (TEILTLRTYPQYYGSNFVCK) are extracellular. C98 and C173 are joined by a disulfide. The chain crosses the membrane as a helical span at residues 100 to 120 (LMRYVQMFPMYASPFLLVAIS). Residues 121–143 (ADRYQAICRPLAHFRSSRYRRPN) lie on the Cytoplasmic side of the membrane. A helical transmembrane segment spans residues 144–164 (WMAAIAWGLALVLSIPQFFVW). Topologically, residues 165 to 187 (TKHSKTGRCSTIYGQNKNTVKIT) are extracellular. A helical membrane pass occupies residues 188–208 (YVIMFNTLAWLLPSILAAVFY). Residues 209-271 (YCVCKAVRLS…DRKRVQTVRL (63 aa)) are Cytoplasmic-facing. The chain crosses the membrane as a helical span at residues 272–292 (TITIVACNFFLWMPFCLINVI). Residues 293–302 (QALWPEISHI) lie on the Extracellular side of the membrane. The chain crosses the membrane as a helical span at residues 303-325 (MFINYVAILGNLNSCLNPWIYIL). Topologically, residues 326–398 (FNRSHVRKAL…DSTSLKTNSN (73 aa)) are cytoplasmic.

Belongs to the G-protein coupled receptor 1 family. Vasopressin/oxytocin receptor subfamily. In terms of tissue distribution, detected in the ADL sensory neurons, the RMED and RMEV motor neurons, and the PQR tail neuron. In males, detected in SPC tail neurons involved in spicule penetration and sperm transfer, and male-specific oblique muscles involved in vulval contact.

Its subcellular location is the cell membrane. Not directly activated by nematocin. May modulate activity of the nematocin receptor ntr-1, leading to reduced intracellular cAMP production. Plays a role in male mating behavior. The protein is Nematocin receptor 2 of Caenorhabditis elegans.